The following is a 210-amino-acid chain: ATP-dependent dethiobiotin synthetase BioD (210 aa).

Residue 13–18 (DVGKTV) coordinates ATP. Threonine 17 lines the Mg(2+) pocket. Lysine 33 is an active-site residue. Mg(2+) is bound by residues arginine 47 and glutamate 101. ATP contacts are provided by residues 101-104 (EGAG) and 185-187 (PPL).

It belongs to the dethiobiotin synthetase family. In terms of assembly, homodimer. Mg(2+) serves as cofactor.

Its subcellular location is the cytoplasm. It carries out the reaction (7R,8S)-7,8-diammoniononanoate + CO2 + ATP = (4R,5S)-dethiobiotin + ADP + phosphate + 3 H(+). It functions in the pathway cofactor biosynthesis; biotin biosynthesis; biotin from 7,8-diaminononanoate: step 1/2. Its function is as follows. Catalyzes a mechanistically unusual reaction, the ATP-dependent insertion of CO2 between the N7 and N8 nitrogen atoms of 7,8-diaminopelargonic acid (DAPA, also called 7,8-diammoniononanoate) to form a ureido ring. The chain is ATP-dependent dethiobiotin synthetase BioD from Afipia carboxidovorans (strain ATCC 49405 / DSM 1227 / KCTC 32145 / OM5) (Oligotropha carboxidovorans).